The primary structure comprises 604 residues: Replication protein A 70 kDa DNA-binding subunit B (604 aa).

A DNA-binding region (OB) is located at residues Trp-170–Glu-256. A C4-type zinc finger spans residues Cys-468–Cys-488.

It belongs to the replication factor A protein 1 family. Heterotrimer of RPA1, RPA2 and RPA3 (canonical replication protein A complex).

The protein resides in the nucleus. Component of the replication protein A complex (RPA) required for DNA recombination, repair and replication. The activity of RPA is mediated by single-stranded DNA binding and protein interactions. Probably involved in repair of double-strand DNA breaks (DSBs) induced by genotoxic stresses. This is Replication protein A 70 kDa DNA-binding subunit B (RPA1B) from Arabidopsis thaliana (Mouse-ear cress).